Reading from the N-terminus, the 147-residue chain is Sec-independent protein translocase protein TatB (147 aa).

A helical membrane pass occupies residues 2–22; the sequence is FDGIGFMELLLIGVLGLVVLG. Residues 85–97 are compositionally biased toward polar residues; sequence QLKQAAQSVNRPY. Residues 85–147 are disordered; the sequence is QLKQAAQSVN…DTRSNPKANG (63 aa). Residues 113 to 133 are compositionally biased toward low complexity; it reads ASQSVSTEASPSASSAPTSES.

It belongs to the TatB family. The Tat system comprises two distinct complexes: a TatABC complex, containing multiple copies of TatA, TatB and TatC subunits, and a separate TatA complex, containing only TatA subunits. Substrates initially bind to the TatABC complex, which probably triggers association of the separate TatA complex to form the active translocon.

The protein resides in the cell inner membrane. Functionally, part of the twin-arginine translocation (Tat) system that transports large folded proteins containing a characteristic twin-arginine motif in their signal peptide across membranes. Together with TatC, TatB is part of a receptor directly interacting with Tat signal peptides. TatB may form an oligomeric binding site that transiently accommodates folded Tat precursor proteins before their translocation. In Shewanella sp. (strain ANA-3), this protein is Sec-independent protein translocase protein TatB.